The chain runs to 88 residues: Large ribosomal subunit protein bL27 (88 aa).

The disordered stretch occupies residues 1–21 (MAHKKGQGSTQNNRDSAGRRL).

This sequence belongs to the bacterial ribosomal protein bL27 family.

The protein is Large ribosomal subunit protein bL27 of Helicobacter pylori (strain J99 / ATCC 700824) (Campylobacter pylori J99).